The sequence spans 150 residues: Endoribonuclease YbeY (150 aa).

Residues H115, H119, and H125 each contribute to the Zn(2+) site.

It belongs to the endoribonuclease YbeY family. The cofactor is Zn(2+).

It localises to the cytoplasm. Single strand-specific metallo-endoribonuclease involved in late-stage 70S ribosome quality control and in maturation of the 3' terminus of the 16S rRNA. This chain is Endoribonuclease YbeY, found in Aquifex aeolicus (strain VF5).